A 932-amino-acid chain; its full sequence is MEARALEHERRLAESHGQEALKHAIAAAEIYMRAAEKAANPKDRNRLQRKCSDLIALGERLKANAKSAATSARSPVPESTRTLTIAEKTLLLKSSKLHGNIFPPWEKTPASDEFAASKAADGCFTDHSPFTLSPEQQDIFAGWKRPHEIFMDVPERGVDVFMTATESIDLGQDLATDCSVVASLCAAVRQFGPRTGSLLSSLMYPYDDDVKRPAVSQNGKYIFRMYFNGCWRKVLIDDRLPTSSSERTLYVVDRRNPYLIWPALIEKAYLKIRGGYDFPGSNSGTDLHALTGWIPEQIFLQTDDIELNETWSRIKTAYEQGNALVTLGTGKFSREEERTLGLVREHDYAVLDLRNDGNNRLFLVKNPWRDSLVWTGVGSTATSSTDRSGSPEESMSNTFWMTFEDVLQHFDSLYVNWSPSLFRFRQDHHFTWTIPPKAEELVFTQNPQYSILSHTGSPVWILLNRHWQDSELDILRERKQEHDFHQPLKSLGYMSLSLFASHPPGTRIPLSEGSHHALHQGPFVDSPNTLLRYSPTPGVAQTLVIAQSDLPLPSYSFTLSFFSNSPLTISPASDPLPYNETITGAWTRRTAGGSTVYPSYVTNPQYALTLTRPSPLSLVLSTERADNLPVHIAVLYSNGGQRVTAVVGRDLICSSAEYQRGCTFASTLPSSNTSNVTSSVASNNHGHTSSSLIDPGTYTIVLSTYEPGQTGRYSLRVSAACPFTIEPILSDAAGRLRTPAPSPATFRQGEGRVRARVDVARLTRASVLARSVKTGSTTQKTAMVRVALELGTIEGRKRVLASTASGGGGELAASLSNLSLSERLGGIGGIGGGHIHGGQGTTEGDGYSAKGEFADASLGLRTREVDLDPDVIRVYGGLWLVVEQIGGGGQGHVTEGSDDDGGGGGGGGGGVHVEISSDGVVSIGEWEVADED.

The region spanning 96–419 (KLHGNIFPPW…FDSLYVNWSP (324 aa)) is the Calpain catalytic domain. Catalysis depends on residues cysteine 178, histidine 346, and asparagine 366. A disordered region spans residues 890 to 932 (QGHVTEGSDDDGGGGGGGGGGVHVEISSDGVVSIGEWEVADED). Residues 902–911 (GGGGGGGGGV) are compositionally biased toward gly residues.

Belongs to the peptidase C2 family. PalB/RIM13 subfamily.

Functionally, required for the proteolytic cleavage of the transcription factor pacc-1 in response to alkaline ambient pH. This is Calpain-like protease palB/cpr-8 (cpr-8) from Neurospora crassa (strain ATCC 24698 / 74-OR23-1A / CBS 708.71 / DSM 1257 / FGSC 987).